The primary structure comprises 112 residues: MKKFLFLLLACAAVAFAAETNAPVEQEAINVWIKAFSVLAAGLGLGVAALGGAIGMGNTAAATIAGTARNPGLGPKLMTTMFIALAMIEAQVIYALVIALIALYANPFIVLQ.

Helical transmembrane passes span Phe-36–Met-56 and Met-81–Ile-101.

This sequence belongs to the ATPase C chain family. F-type ATPases have 2 components, F(1) - the catalytic core - and F(0) - the membrane proton channel. F(1) has five subunits: alpha(3), beta(3), gamma(1), delta(1), epsilon(1). F(0) has three main subunits: a(1), b(2) and c(10-14). The alpha and beta chains form an alternating ring which encloses part of the gamma chain. F(1) is attached to F(0) by a central stalk formed by the gamma and epsilon chains, while a peripheral stalk is formed by the delta and b chains.

It localises to the cell inner membrane. In terms of biological role, f(1)F(0) ATP synthase produces ATP from ADP in the presence of a proton or sodium gradient. F-type ATPases consist of two structural domains, F(1) containing the extramembraneous catalytic core and F(0) containing the membrane proton channel, linked together by a central stalk and a peripheral stalk. During catalysis, ATP synthesis in the catalytic domain of F(1) is coupled via a rotary mechanism of the central stalk subunits to proton translocation. Its function is as follows. Key component of the F(0) channel; it plays a direct role in translocation across the membrane. A homomeric c-ring of between 10-14 subunits forms the central stalk rotor element with the F(1) delta and epsilon subunits. The protein is ATP synthase subunit c of Campylobacter jejuni subsp. doylei (strain ATCC BAA-1458 / RM4099 / 269.97).